A 223-amino-acid chain; its full sequence is Ubiquitin carboxyl-terminal hydrolase isozyme L1 (223 aa).

Position 1 is an N-acetylmethionine (methionine 1). In terms of domain architecture, UCH catalytic spans 2–221 (QLKPMEINPE…VRFSAVALCK (220 aa)). The interval 5–10 (PMEINP) is interaction with ubiquitin. Catalysis depends on cysteine 90, which acts as the Nucleophile. Position 125 is a phosphoserine (serine 125). Histidine 161 serves as the catalytic Proton donor. The tract at residues 211-216 (EVRFSA) is interaction with ubiquitin. Cysteine 220 carries S-farnesyl cysteine lipidation. Residues 221–223 (KAA) constitute a propeptide, removed in mature form.

It belongs to the peptidase C12 family. As to quaternary structure, monomer. Homodimer. Interacts with COPS5 and SNCA. Post-translationally, O-glycosylated.

The protein resides in the cytoplasm. Its subcellular location is the endoplasmic reticulum membrane. The enzyme catalyses Thiol-dependent hydrolysis of ester, thioester, amide, peptide and isopeptide bonds formed by the C-terminal Gly of ubiquitin (a 76-residue protein attached to proteins as an intracellular targeting signal).. Its function is as follows. Ubiquitin-protein hydrolase involved both in the processing of ubiquitin precursors and of ubiquitinated proteins. This enzyme is a thiol protease that recognizes and hydrolyzes a peptide bond at the C-terminal glycine of ubiquitin. Also binds to free monoubiquitin and may prevent its degradation in lysosomes. The homodimer may have ATP-independent ubiquitin ligase activity. This chain is Ubiquitin carboxyl-terminal hydrolase isozyme L1 (UCHL1), found in Sus scrofa (Pig).